The following is a 429-amino-acid chain: MNILIIGNGGREHALAWKVAQSPMAEKVFVAPGNAGTALEEKVENVAISATDVEKLVAFAQANHIGLTIVGPEAPLVIGVVDAFRAAGLKIFGPTKAAAQLEGSKAFTKDFLARHHIPTAEYQNFTEVEPALAYLREKGAPIVVKADGLAAGKGVIVAMTLDEAEAAVKEMLSGNAFGEAGSRVVIEEFLDGEEASFIVMVDGKNVEPMATSQDHKRVGENDTGLNTGGMGAYSPAPVVTPEIHERIMQQVIYPTVNGMAAEGNIYTGFLYAGLMIMPNGQPKVIEFNCRFGDPETQPIMLRLESDLVELCLAACDGKLDQKKSQWCEQASLGIVLAAEGYPGDYRKGDEITGIESAVENQKVFLAGVENKDGKLVTNGGRVVCVTALGDTVYDAQQQALALAEQVKWTGRFYRRDIGYRAVAREKNNA.

An ATP-grasp domain is found at 109 to 316; that stretch reads KDFLARHHIP…LVELCLAACD (208 aa). 135–196 is an ATP binding site; it reads LREKGAPIVV…EEFLDGEEAS (62 aa). A disordered region spans residues 209-231; the sequence is MATSQDHKRVGENDTGLNTGGMG. The Mg(2+) site is built by glutamate 286 and asparagine 288.

This sequence belongs to the GARS family. It depends on Mg(2+) as a cofactor. Mn(2+) serves as cofactor.

It catalyses the reaction 5-phospho-beta-D-ribosylamine + glycine + ATP = N(1)-(5-phospho-beta-D-ribosyl)glycinamide + ADP + phosphate + H(+). It functions in the pathway purine metabolism; IMP biosynthesis via de novo pathway; N(1)-(5-phospho-D-ribosyl)glycinamide from 5-phospho-alpha-D-ribose 1-diphosphate: step 2/2. In Pasteurella multocida (strain Pm70), this protein is Phosphoribosylamine--glycine ligase.